The chain runs to 709 residues: Elongation factor G (709 aa).

The region spanning 6 to 295 is the tr-type G domain; that stretch reads KFLRNIGIMA…AVCTYLPSPL (290 aa). GTP-binding positions include 15–22, 92–96, and 146–149; these read AHIDAGKT, DTPGH, and NKMD.

Belongs to the TRAFAC class translation factor GTPase superfamily. Classic translation factor GTPase family. EF-G/EF-2 subfamily.

Its subcellular location is the cytoplasm. Functionally, catalyzes the GTP-dependent ribosomal translocation step during translation elongation. During this step, the ribosome changes from the pre-translocational (PRE) to the post-translocational (POST) state as the newly formed A-site-bound peptidyl-tRNA and P-site-bound deacylated tRNA move to the P and E sites, respectively. Catalyzes the coordinated movement of the two tRNA molecules, the mRNA and conformational changes in the ribosome. The polypeptide is Elongation factor G (Amoebophilus asiaticus (strain 5a2)).